We begin with the raw amino-acid sequence, 239 residues long: 2,3,4,5-tetrahydropyridine-2,6-dicarboxylate N-acetyltransferase (239 aa).

Belongs to the transferase hexapeptide repeat family. DapH subfamily.

It catalyses the reaction (S)-2,3,4,5-tetrahydrodipicolinate + acetyl-CoA + H2O = L-2-acetamido-6-oxoheptanedioate + CoA. Its pathway is amino-acid biosynthesis; L-lysine biosynthesis via DAP pathway; LL-2,6-diaminopimelate from (S)-tetrahydrodipicolinate (acetylase route): step 1/3. Catalyzes the transfer of an acetyl group from acetyl-CoA to tetrahydrodipicolinate. This is 2,3,4,5-tetrahydropyridine-2,6-dicarboxylate N-acetyltransferase from Staphylococcus carnosus (strain TM300).